Consider the following 292-residue polypeptide: Elongation factor Ts (292 aa).

The tract at residues 79 to 82 (TDFV) is involved in Mg(2+) ion dislocation from EF-Tu.

It belongs to the EF-Ts family.

The protein resides in the cytoplasm. Its function is as follows. Associates with the EF-Tu.GDP complex and induces the exchange of GDP to GTP. It remains bound to the aminoacyl-tRNA.EF-Tu.GTP complex up to the GTP hydrolysis stage on the ribosome. The polypeptide is Elongation factor Ts (Xylella fastidiosa (strain Temecula1 / ATCC 700964)).